A 107-amino-acid polypeptide reads, in one-letter code: Ig kappa chain V-VI region J539 (107 aa).

Residues 1 to 23 form a framework-1 region; sequence EIVLTQSPAITAASLGQKVTITC. A disulfide bond links Cys23 and Cys87. The tract at residues 24-33 is complementarity-determining-1; sequence SASSSVSSLH. The framework-2 stretch occupies residues 34 to 48; that stretch reads WYQQKSGTSPKPWIY. A complementarity-determining-2 region spans residues 49–55; it reads EISKLAS. A framework-3 region spans residues 56–87; sequence GVPARFSGSGSGTSYSLTINTMEAEDAAIYYC. The segment at 88 to 96 is complementarity-determining-3; the sequence is QQWTYPLIT. The segment at 97 to 106 is framework-4; the sequence is FGAGTKLELK.

In Mus musculus (Mouse), this protein is Ig kappa chain V-VI region J539.